Reading from the N-terminus, the 439-residue chain is Xaa-Pro dipeptidase (439 aa).

Asp244, Asp255, His335, Glu380, and Glu419 together coordinate Mn(2+).

Belongs to the peptidase M24B family. Bacterial-type prolidase subfamily. The cofactor is Mn(2+).

The catalysed reaction is Xaa-L-Pro dipeptide + H2O = an L-alpha-amino acid + L-proline. Functionally, splits dipeptides with a prolyl residue in the C-terminal position. This is Xaa-Pro dipeptidase from Shewanella sp. (strain ANA-3).